Here is a 63-residue protein sequence, read N- to C-terminus: Large ribosomal subunit protein bL32c (63 aa).

The tract at residues 39-63 (SFSSGNEHPKPKGFSGQQTNNKIFE) is disordered. Residues 53–63 (SGQQTNNKIFE) show a composition bias toward polar residues.

The protein belongs to the bacterial ribosomal protein bL32 family.

It is found in the plastid. The protein localises to the chloroplast. This chain is Large ribosomal subunit protein bL32c, found in Triticum aestivum (Wheat).